Here is a 252-residue protein sequence, read N- to C-terminus: ATP synthase subunit a (252 aa).

A run of 6 helical transmembrane segments spans residues 29–49 (FTNV…FLFI), 87–107 (FFPL…IGLF), 117–137 (IMIT…CGFY), 146–166 (LFVP…IEVI), 196–216 (FIVS…LPLI), and 219–239 (VAIT…FTVL).

It belongs to the ATPase A chain family. In terms of assembly, F-type ATPases have 2 components, CF(1) - the catalytic core - and CF(0) - the membrane proton channel. CF(1) has five subunits: alpha(3), beta(3), gamma(1), delta(1), epsilon(1). CF(0) has three main subunits: a(1), b(2) and c(9-12). The alpha and beta chains form an alternating ring which encloses part of the gamma chain. CF(1) is attached to CF(0) by a central stalk formed by the gamma and epsilon chains, while a peripheral stalk is formed by the delta and b chains.

Its subcellular location is the cell inner membrane. Key component of the proton channel; it plays a direct role in the translocation of protons across the membrane. The chain is ATP synthase subunit a from Bartonella bacilliformis (strain ATCC 35685 / KC583 / Herrer 020/F12,63).